The sequence spans 196 residues: Imidazole glycerol phosphate synthase subunit HisH (196 aa).

The Glutamine amidotransferase type-1 domain maps to 2-196; that stretch reads KVAVVKYNAG…ERVLRNFLDL (195 aa). Cysteine 77 (nucleophile) is an active-site residue. Catalysis depends on residues histidine 178 and glutamate 180.

As to quaternary structure, heterodimer of HisH and HisF.

It localises to the cytoplasm. It carries out the reaction 5-[(5-phospho-1-deoxy-D-ribulos-1-ylimino)methylamino]-1-(5-phospho-beta-D-ribosyl)imidazole-4-carboxamide + L-glutamine = D-erythro-1-(imidazol-4-yl)glycerol 3-phosphate + 5-amino-1-(5-phospho-beta-D-ribosyl)imidazole-4-carboxamide + L-glutamate + H(+). The enzyme catalyses L-glutamine + H2O = L-glutamate + NH4(+). It participates in amino-acid biosynthesis; L-histidine biosynthesis; L-histidine from 5-phospho-alpha-D-ribose 1-diphosphate: step 5/9. Its function is as follows. IGPS catalyzes the conversion of PRFAR and glutamine to IGP, AICAR and glutamate. The HisH subunit catalyzes the hydrolysis of glutamine to glutamate and ammonia as part of the synthesis of IGP and AICAR. The resulting ammonia molecule is channeled to the active site of HisF. This is Imidazole glycerol phosphate synthase subunit HisH from Bacteroides thetaiotaomicron (strain ATCC 29148 / DSM 2079 / JCM 5827 / CCUG 10774 / NCTC 10582 / VPI-5482 / E50).